The primary structure comprises 380 residues: ATP phosphoribosyltransferase regulatory subunit (380 aa).

This sequence belongs to the class-II aminoacyl-tRNA synthetase family. HisZ subfamily. In terms of assembly, heteromultimer composed of HisG and HisZ subunits.

It is found in the cytoplasm. It participates in amino-acid biosynthesis; L-histidine biosynthesis; L-histidine from 5-phospho-alpha-D-ribose 1-diphosphate: step 1/9. Functionally, required for the first step of histidine biosynthesis. May allow the feedback regulation of ATP phosphoribosyltransferase activity by histidine. The polypeptide is ATP phosphoribosyltransferase regulatory subunit (Thermoanaerobacter pseudethanolicus (strain ATCC 33223 / 39E) (Clostridium thermohydrosulfuricum)).